The sequence spans 445 residues: V-type proton ATPase subunit H (445 aa).

It belongs to the V-ATPase H subunit family. In terms of assembly, V-ATPase is a heteromultimeric enzyme composed of a peripheral catalytic V1 complex (components A to H) attached to an integral membrane V0 proton pore complex (components: a, c, c', c'' and d).

Subunit of the peripheral V1 complex of vacuolar ATPase. Subunit H activates the ATPase activity of the enzyme and couples ATPase activity to proton flow. Vacuolar ATPase is responsible for acidifying a variety of intracellular compartments in eukaryotic cells, thus providing most of the energy required for transport processes in the vacuolar system. This is V-type proton ATPase subunit H (vatH) from Dictyostelium discoideum (Social amoeba).